We begin with the raw amino-acid sequence, 339 residues long: Glycerol-3-phosphate dehydrogenase [NAD(P)+] (339 aa).

NADPH is bound by residues Ser14, Tyr15, His35, and Lys109. Residues Lys109, Gly138, and Thr140 each coordinate sn-glycerol 3-phosphate. Residue Ala142 participates in NADPH binding. Residues Lys194, Asp247, Ser257, Arg258, and Asn259 each contribute to the sn-glycerol 3-phosphate site. Residue Lys194 is the Proton acceptor of the active site. Arg258 contributes to the NADPH binding site. The NADPH site is built by Val282 and Glu284.

Belongs to the NAD-dependent glycerol-3-phosphate dehydrogenase family.

The protein resides in the cytoplasm. The catalysed reaction is sn-glycerol 3-phosphate + NAD(+) = dihydroxyacetone phosphate + NADH + H(+). The enzyme catalyses sn-glycerol 3-phosphate + NADP(+) = dihydroxyacetone phosphate + NADPH + H(+). The protein operates within membrane lipid metabolism; glycerophospholipid metabolism. Catalyzes the reduction of the glycolytic intermediate dihydroxyacetone phosphate (DHAP) to sn-glycerol 3-phosphate (G3P), the key precursor for phospholipid synthesis. The polypeptide is Glycerol-3-phosphate dehydrogenase [NAD(P)+] (Shewanella halifaxensis (strain HAW-EB4)).